The following is a 177-amino-acid chain: tRNA (cytidine(56)-2'-O)-methyltransferase (177 aa).

S-adenosyl-L-methionine-binding positions include L84 and 109 to 113 (GAEKV).

This sequence belongs to the aTrm56 family. As to quaternary structure, homodimer.

It localises to the cytoplasm. It catalyses the reaction cytidine(56) in tRNA + S-adenosyl-L-methionine = 2'-O-methylcytidine(56) in tRNA + S-adenosyl-L-homocysteine + H(+). In terms of biological role, specifically catalyzes the AdoMet-dependent 2'-O-ribose methylation of cytidine at position 56 in tRNAs. The chain is tRNA (cytidine(56)-2'-O)-methyltransferase from Methanosarcina barkeri (strain Fusaro / DSM 804).